Consider the following 2193-residue polypeptide: Genome polyprotein (2193 aa).

The interval 1 to 22 (MGSQVSTQRSGSHENSNSASEG) is disordered. Residue Gly2 is the site of N-myristoyl glycine; by host attachment. Topologically, residues 2-1503 (GSQVSTQRSG…HLNRAVLIMQ (1502 aa)) are cytoplasmic. Amphipathic alpha-helix stretches follow at residues 566-588 (GDGIADMIDQAVTSRVGRALTSL) and 568-588 (GIADMIDQAVTSRVGRALTSL). Residues His883 and Asp901 each act as for protease 2A activity in the active site. Zn(2+)-binding residues include Cys918 and Cys920. The active-site For protease 2A activity is Cys972. Residues Cys978 and His980 each coordinate Zn(2+). The membrane-binding stretch occupies residues 1112–1184 (SASWLKKFND…EQSAASQEDL (73 aa)). The segment at 1112–1250 (SASWLKKFND…SPGTGKSLAT (139 aa)) is oligomerization. Residues 1133–1137 (SNKIS) are RNA-binding. The SF3 helicase domain occupies 1216-1374 (EKRMNNYMQF…YKTDLGRLDA (159 aa)). 1240-1247 (GSPGTGKS) provides a ligand contact to ATP. Zn(2+) is bound by residues Cys1381, Cys1392, and Cys1397. Residues 1381–1397 (CSENNTANFKRCSPLVC) form a C4-type; degenerate zinc finger. The tract at residues 1424–1431 (EYNNRYAI) is RNA-binding. The segment at 1435-1440 (IEALFQ) is oligomerization. Residues 1504–1519 (SIATVVAVVSLVYVIY) lie within the membrane without spanning it. Residues 1520-2193 (KLFAGFQGAY…NLRRNWLELF (674 aa)) lie on the Cytoplasmic side of the membrane. Residue Tyr1529 is modified to O-(5'-phospho-RNA)-tyrosine. One can recognise a Peptidase C3 domain in the interval 1549 to 1727 (GPSLDFALSL…FCAGLKRSYF (179 aa)). Residues His1588, Glu1619, and Cys1695 each act as for protease 3C activity in the active site. The 116-residue stretch at 1958 to 2073 (GSLFAFDYSG…ASYPFPIDCL (116 aa)) folds into the RdRp catalytic domain. Positions 1964 and 2060 each coordinate Mg(2+).

The protein belongs to the picornaviruses polyprotein family. As to quaternary structure, interacts with capsid protein VP1 and capsid protein VP3 to form heterotrimeric protomers. Interacts with capsid protein VP0, and capsid protein VP3 to form heterotrimeric protomers. Five protomers subsequently associate to form pentamers which serve as building blocks for the capsid. Interacts with capsid protein VP2, capsid protein VP3 and capsid protein VP4 following cleavage of capsid protein VP0. In terms of assembly, interacts with capsid protein VP1 and capsid protein VP3 in the mature capsid. As to quaternary structure, interacts with capsid protein VP0 and capsid protein VP1 to form heterotrimeric protomers. Five protomers subsequently associate to form pentamers which serve as building blocks for the capsid. Interacts with capsid protein VP4 in the mature capsid. Interacts with protein 2C; this interaction may be important for virion morphogenesis. Interacts with capsid protein VP1 and capsid protein VP3. In terms of assembly, homodimer. As to quaternary structure, homohexamer; forms a hexameric ring structure with 6-fold symmetry characteristic of AAA+ ATPases. Interacts (via N-terminus) with host RTN3 (via reticulon domain); this interaction is important for viral replication. Interacts with capsid protein VP3; this interaction may be important for virion morphogenesis. Interacts with protein 3CD. In terms of assembly, homodimer. Interacts with host GBF1. Interacts (via GOLD domain) with host ACBD3 (via GOLD domain); this interaction allows the formation of a viral protein 3A/ACBD3 heterotetramer with a 2:2 stoichiometry, which will stimulate the recruitment of host PI4KB in order to synthesize PI4P at the viral RNA replication sites. As to quaternary structure, interacts with RNA-directed RNA polymerase. Interacts with host IFIH1/MDA5; this interaction inhibits host IFIH1. In terms of assembly, interacts with protein 3AB and with RNA-directed RNA polymerase. As to quaternary structure, interacts with Viral protein genome-linked and with protein 3CD. Requires Mg(2+) as cofactor. Post-translationally, specific enzymatic cleavages in vivo by the viral proteases yield processing intermediates and the mature proteins. Myristoylation is required for the formation of pentamers during virus assembly. Further assembly of 12 pentamers and a molecule of genomic RNA generates the provirion. In terms of processing, during virion maturation, immature virions are rendered infectious following cleavage of VP0 into VP4 and VP2. This maturation seems to be an autocatalytic event triggered by the presence of RNA in the capsid and it is followed by a conformational change infectious virion. Post-translationally, myristoylation is required during RNA encapsidation and formation of the mature virus particle. VPg is uridylylated by the polymerase into VPg-pUpU. This acts as a nucleotide-peptide primer for the genomic RNA replication.

The protein localises to the virion. Its subcellular location is the host cytoplasm. The protein resides in the host cytoplasmic vesicle membrane. It is found in the host nucleus. The catalysed reaction is a ribonucleoside 5'-triphosphate + H2O = a ribonucleoside 5'-diphosphate + phosphate + H(+). It carries out the reaction Selective cleavage of Tyr-|-Gly bond in the picornavirus polyprotein.. The enzyme catalyses RNA(n) + a ribonucleoside 5'-triphosphate = RNA(n+1) + diphosphate. It catalyses the reaction Selective cleavage of Gln-|-Gly bond in the poliovirus polyprotein. In other picornavirus reactions Glu may be substituted for Gln, and Ser or Thr for Gly.. Replication or transcription is subject to high level of random mutations by the nucleotide analog ribavirin. Functionally, forms an icosahedral capsid of pseudo T=3 symmetry with capsid proteins VP2 and VP3. The capsid is 300 Angstroms in diameter, composed of 60 copies of each capsid protein and enclosing the viral positive strand RNA genome. Capsid protein VP1 mainly forms the vertices of the capsid. Capsid protein VP1 interacts with host cell receptor to provide virion attachment to target host cells. This attachment induces virion internalization. After binding to its receptor, the capsid undergoes conformational changes. Capsid protein VP1 N-terminus (that contains an amphipathic alpha-helix) and capsid protein VP4 are externalized. Together, they shape a pore in the host membrane through which viral genome is translocated to host cell cytoplasm. In terms of biological role, forms an icosahedral capsid of pseudo T=3 symmetry with capsid proteins VP2 and VP3. The capsid is 300 Angstroms in diameter, composed of 60 copies of each capsid protein and enclosing the viral positive strand RNA genome. Lies on the inner surface of the capsid shell. After binding to the host receptor, the capsid undergoes conformational changes. Capsid protein VP4 is released, Capsid protein VP1 N-terminus is externalized, and together, they shape a pore in the host membrane through which the viral genome is translocated into the host cell cytoplasm. Its function is as follows. Component of immature procapsids, which is cleaved into capsid proteins VP4 and VP2 after maturation. Allows the capsid to remain inactive before the maturation step. Functionally, cysteine protease that cleaves viral polyprotein and specific host proteins. It is responsible for the autocatalytic cleavage between the P1 and P2 regions, which is the first cleavage occurring in the polyprotein. Also cleaves the host translation initiation factor EIF4G1, in order to shut down the capped cellular mRNA translation. Inhibits the host nucleus-cytoplasm protein and RNA trafficking by cleaving host members of the nuclear pores. Counteracts stress granule formation probably by antagonizing its assembly or promoting its dissassembly. Cleaves and inhibits host IFIH1/MDA5, thereby inhibiting the type-I IFN production and the establishment of the antiviral state. Cleaves and inhibits host MAVS, thereby inhibiting the type-I IFN production and the establishment of the antiviral state. In terms of biological role, plays an essential role in the virus replication cycle by acting as a viroporin. Creates a pore in the host endoplasmic reticulum and as a consequence releases Ca2+ in the cytoplasm of infected cell. In turn, high levels of cytoplasmic calcium may trigger membrane trafficking and transport of viral ER-associated proteins to viroplasms, sites of viral genome replication. Induces and associates with structural rearrangements of intracellular membranes. Displays RNA-binding, nucleotide binding and NTPase activities. May play a role in virion morphogenesis and viral RNA encapsidation by interacting with the capsid protein VP3. Its function is as follows. Localizes the viral replication complex to the surface of membranous vesicles. Together with protein 3CD binds the Cis-Active RNA Element (CRE) which is involved in RNA synthesis initiation. Acts as a cofactor to stimulate the activity of 3D polymerase, maybe through a nucleid acid chaperone activity. Functionally, localizes the viral replication complex to the surface of membranous vesicles. It inhibits host cell endoplasmic reticulum-to-Golgi apparatus transport and causes the disassembly of the Golgi complex, possibly through GBF1 interaction. This would result in depletion of MHC, trail receptors and IFN receptors at the host cell surface. Plays an essential role in viral RNA replication by recruiting ACBD3 and PI4KB at the viral replication sites, thereby allowing the formation of the rearranged membranous structures where viral replication takes place. In terms of biological role, acts as a primer for viral RNA replication and remains covalently bound to viral genomic RNA. VPg is uridylylated prior to priming replication into VPg-pUpU. The oriI viral genomic sequence may act as a template for this. The VPg-pUpU is then used as primer on the genomic RNA poly(A) by the RNA-dependent RNA polymerase to replicate the viral genome. During genome replication, the VPg-RNA linkage is removed by the host TDP2, thereby accelerating replication. During the late stage of the replication cycle, host TDP2 is excluded from sites of viral RNA synthesis and encapsidation, allowing for the generation of progeny virions. Involved in the viral replication complex and viral polypeptide maturation. It exhibits protease activity with a specificity and catalytic efficiency that is different from protease 3C. Protein 3CD lacks polymerase activity. Protein 3CD binds to the 5'UTR of the viral genome. Its function is as follows. Major viral protease that mediates proteolytic processing of the polyprotein. Cleaves host EIF5B, contributing to host translation shutoff. Also cleaves host PABPC1, contributing to host translation shutoff. Binds and inhibits host IFIH1/MDA5, thereby inhibiting the type-I IFN production and the establishment of the antiviral state. Cleaves host MAP3K7/TAK1, resulting in inhibition of TRAF6-triggered NF-kappa-B induction. Cleaves host NLRP1, triggers host N-glycine-mediated degradation of the autoinhibitory NLRP1 N-terminal fragment. Functionally, replicates the viral genomic RNA on the surface of intracellular membranes. May form linear arrays of subunits that propagate along a strong head-to-tail interaction called interface-I. Covalently attaches UMP to a tyrosine of VPg, which is used to prime RNA synthesis. The positive stranded RNA genome is first replicated at virus induced membranous vesicles, creating a dsRNA genomic replication form. This dsRNA is then used as template to synthesize positive stranded RNA genomes. ss(+)RNA genomes are either translated, replicated or encapsidated. This chain is Genome polyprotein, found in Homo sapiens (Human).